We begin with the raw amino-acid sequence, 344 residues long: tRNA N6-adenosine threonylcarbamoyltransferase (344 aa).

Positions 112 and 116 each coordinate Fe cation. Substrate-binding positions include 134–138 (LASGG), Asp167, Gly180, and Asn280. Residue Asp308 coordinates Fe cation.

It belongs to the KAE1 / TsaD family. Fe(2+) is required as a cofactor.

It localises to the cytoplasm. It carries out the reaction L-threonylcarbamoyladenylate + adenosine(37) in tRNA = N(6)-L-threonylcarbamoyladenosine(37) in tRNA + AMP + H(+). Its function is as follows. Required for the formation of a threonylcarbamoyl group on adenosine at position 37 (t(6)A37) in tRNAs that read codons beginning with adenine. Is involved in the transfer of the threonylcarbamoyl moiety of threonylcarbamoyl-AMP (TC-AMP) to the N6 group of A37, together with TsaE and TsaB. TsaD likely plays a direct catalytic role in this reaction. This Rickettsia peacockii (strain Rustic) protein is tRNA N6-adenosine threonylcarbamoyltransferase.